Here is a 252-residue protein sequence, read N- to C-terminus: Phosphoribosylformylglycinamidine synthase subunit PurQ (252 aa).

Residues 6-237 (VGVVVFPGSN…FAHLAGTKRS (232 aa)) enclose the Glutamine amidotransferase type-1 domain. Catalysis depends on cysteine 89, which acts as the Nucleophile. Active-site residues include histidine 206 and glutamate 208.

In terms of assembly, part of the FGAM synthase complex composed of 1 PurL, 1 PurQ and 2 PurS subunits.

The protein localises to the cytoplasm. The enzyme catalyses N(2)-formyl-N(1)-(5-phospho-beta-D-ribosyl)glycinamide + L-glutamine + ATP + H2O = 2-formamido-N(1)-(5-O-phospho-beta-D-ribosyl)acetamidine + L-glutamate + ADP + phosphate + H(+). The catalysed reaction is L-glutamine + H2O = L-glutamate + NH4(+). It functions in the pathway purine metabolism; IMP biosynthesis via de novo pathway; 5-amino-1-(5-phospho-D-ribosyl)imidazole from N(2)-formyl-N(1)-(5-phospho-D-ribosyl)glycinamide: step 1/2. Part of the phosphoribosylformylglycinamidine synthase complex involved in the purines biosynthetic pathway. Catalyzes the ATP-dependent conversion of formylglycinamide ribonucleotide (FGAR) and glutamine to yield formylglycinamidine ribonucleotide (FGAM) and glutamate. The FGAM synthase complex is composed of three subunits. PurQ produces an ammonia molecule by converting glutamine to glutamate. PurL transfers the ammonia molecule to FGAR to form FGAM in an ATP-dependent manner. PurS interacts with PurQ and PurL and is thought to assist in the transfer of the ammonia molecule from PurQ to PurL. The sequence is that of Phosphoribosylformylglycinamidine synthase subunit PurQ from Chlorobaculum parvum (strain DSM 263 / NCIMB 8327) (Chlorobium vibrioforme subsp. thiosulfatophilum).